The following is a 378-amino-acid chain: TelA-like protein SAS1347 (378 aa).

Belongs to the TelA family.

The protein is TelA-like protein SAS1347 of Staphylococcus aureus (strain MSSA476).